A 110-amino-acid polypeptide reads, in one-letter code: UPF0122 protein YlxM (110 aa).

Belongs to the UPF0122 family.

Its function is as follows. Might take part in the signal recognition particle (SRP) pathway. This is inferred from the conservation of its genetic proximity to ftsY/ffh. May be a regulatory protein. This Bacillus subtilis (strain 168) protein is UPF0122 protein YlxM (ylxM).